A 158-amino-acid chain; its full sequence is Endoribonuclease YbeY (158 aa).

Zn(2+) contacts are provided by histidine 119, histidine 123, and histidine 129.

This sequence belongs to the endoribonuclease YbeY family. Zn(2+) is required as a cofactor.

The protein resides in the cytoplasm. Functionally, single strand-specific metallo-endoribonuclease involved in late-stage 70S ribosome quality control and in maturation of the 3' terminus of the 16S rRNA. In Acinetobacter baumannii (strain AB307-0294), this protein is Endoribonuclease YbeY.